Reading from the N-terminus, the 211-residue chain is Dephospho-CoA kinase (211 aa).

A DPCK domain is found at 3 to 206 (VIGLTGGIAT…GGRGRRLPNA (204 aa)). ATP is bound at residue 11–16 (ATGKST).

It belongs to the CoaE family.

It localises to the cytoplasm. It carries out the reaction 3'-dephospho-CoA + ATP = ADP + CoA + H(+). It participates in cofactor biosynthesis; coenzyme A biosynthesis; CoA from (R)-pantothenate: step 5/5. Functionally, catalyzes the phosphorylation of the 3'-hydroxyl group of dephosphocoenzyme A to form coenzyme A. The chain is Dephospho-CoA kinase from Anaeromyxobacter dehalogenans (strain 2CP-C).